The primary structure comprises 396 residues: DnaJ homolog subfamily A member 1 (396 aa).

The 63-residue stretch at 6-68 folds into the J domain; it reads TYYDVLGVKP…KKRELYDKGG (63 aa). Lys66 carries the post-translational modification N6-acetyllysine. Ser83 carries the phosphoserine modification. The CR-type zinc finger occupies 120-204; the sequence is GATRKLALQK…CNGRKIVREK (85 aa). Residues Cys133, Cys136, Cys149, Cys152, Cys176, Cys179, Cys192, and Cys195 each coordinate Zn(2+). CXXCXGXG motif repeat units follow at residues 133 to 140, 149 to 156, 176 to 183, and 192 to 199; these read CDKCEGRG, CPNCRGTG, CMECQGHG, and CKSCNGRK. Phosphoserine is present on Ser334. Positions 351 to 396 are disordered; it reads VEETDEMDQVELVDFDPNQERRRHYNGEAYEDDEHHPRGGVQCQTS. The segment covering 352–364 has biased composition (acidic residues); the sequence is EETDEMDQVELVD. Position 380 is a phosphotyrosine (Tyr380). Cys393 bears the Cysteine methyl ester mark. Residue Cys393 is the site of S-farnesyl cysteine attachment. A propeptide spans 394-396 (removed in mature form); that stretch reads QTS.

Identified in a complex with HSPA1B and BAX. Interacts with RNF207.

Its subcellular location is the membrane. It is found in the cytoplasm. It localises to the microsome. The protein localises to the mitochondrion. The protein resides in the nucleus. Its subcellular location is the perinuclear region. Its function is as follows. Co-chaperone for HSPA8/Hsc70. Plays a role in protein transport into mitochondria via its role as co-chaperone. Functions as co-chaperone for HSPA1B and negatively regulates the translocation of BAX from the cytosol to mitochondria in response to cellular stress, thereby protecting cells against apoptosis. Stimulates ATP hydrolysis, but not the folding of unfolded proteins mediated by HSPA1A (in vitro). Promotes apoptosis in response to cellular stress mediated by exposure to anisomycin or UV. This chain is DnaJ homolog subfamily A member 1 (DNAJA1), found in Pongo abelii (Sumatran orangutan).